The primary structure comprises 95 residues: Large ribosomal subunit protein bL25 (95 aa).

Belongs to the bacterial ribosomal protein bL25 family. Part of the 50S ribosomal subunit; part of the 5S rRNA/L5/L18/L25 subcomplex. Contacts the 5S rRNA. Binds to the 5S rRNA independently of L5 and L18.

Its function is as follows. This is one of the proteins that binds to the 5S RNA in the ribosome where it forms part of the central protuberance. The protein is Large ribosomal subunit protein bL25 of Shewanella oneidensis (strain ATCC 700550 / JCM 31522 / CIP 106686 / LMG 19005 / NCIMB 14063 / MR-1).